The chain runs to 142 residues: Putative pre-16S rRNA nuclease (142 aa).

The protein belongs to the YqgF nuclease family.

It localises to the cytoplasm. Functionally, could be a nuclease involved in processing of the 5'-end of pre-16S rRNA. This Saccharophagus degradans (strain 2-40 / ATCC 43961 / DSM 17024) protein is Putative pre-16S rRNA nuclease.